We begin with the raw amino-acid sequence, 250 residues long: Uracil-DNA glycosylase (250 aa).

The active-site Proton acceptor is Asp78. Residues 228 to 250 (RGQKPVDWSGEQNNASRQGKFAL) are disordered.

Belongs to the uracil-DNA glycosylase (UDG) superfamily. UNG family.

It is found in the cytoplasm. The catalysed reaction is Hydrolyzes single-stranded DNA or mismatched double-stranded DNA and polynucleotides, releasing free uracil.. In terms of biological role, excises uracil residues from the DNA which can arise as a result of misincorporation of dUMP residues by DNA polymerase or due to deamination of cytosine. This Bordetella bronchiseptica (strain ATCC BAA-588 / NCTC 13252 / RB50) (Alcaligenes bronchisepticus) protein is Uracil-DNA glycosylase.